Reading from the N-terminus, the 212-residue chain is Fe/S biogenesis protein NfuA (212 aa).

[4Fe-4S] cluster is bound by residues cysteine 169 and cysteine 172.

This sequence belongs to the NfuA family. As to quaternary structure, homodimer. Requires [4Fe-4S] cluster as cofactor.

In terms of biological role, involved in iron-sulfur cluster biogenesis. Binds a 4Fe-4S cluster, can transfer this cluster to apoproteins, and thereby intervenes in the maturation of Fe/S proteins. Could also act as a scaffold/chaperone for damaged Fe/S proteins. The sequence is that of Fe/S biogenesis protein NfuA from Acinetobacter baumannii (strain AB307-0294).